A 398-amino-acid polypeptide reads, in one-letter code: Stimulator of interferon genes protein (398 aa).

Over 1 to 16 (MSVMGEDALVPRARSR) the chain is Cytoplasmic. Residues 17 to 37 (LPVMCAAGLGFLTLAVAWLLD) traverse the membrane as a helical segment. Residues 38–44 (SDKFSER) lie on the Lumenal side of the membrane. The chain crosses the membrane as a helical span at residues 45–65 (AGIIAFGLMLERFIYCICLLA). Residues 66–91 (EELLFHSRQRYHGRMSEIFRACFRGS) lie on the Cytoplasmic side of the membrane. The chain crosses the membrane as a helical span at residues 92-112 (GILGMCAIFLMLMLGGVSFSV). Over 113 to 120 (KQWSHFNL) the chain is Lumenal. The helical transmembrane segment at 121–141 (MCAGYMLLNSLGVLGPAPVEI) threads the bilayer. Over 142–398 (SEICEAKKMN…FNPSSAMKQN (257 aa)) the chain is Cytoplasmic. The tract at residues 150–331 (MNVAHGLAWS…QNLKQQDGEI (182 aa)) is cyclic dinucleotide-binding domain (CBD). Ser159, Tyr164, Arg230, and Thr254 together coordinate 2',3'-cGAMP. Residues Ser159, Tyr164, 230–233 (RSYT), and Thr254 contribute to the 3',3'-c-di-GMP site. A disordered region spans residues 375-398 (PQSLRSEPVETTDYFNPSSAMKQN). Positions 387-398 (DYFNPSSAMKQN) are enriched in polar residues.

This sequence belongs to the STING family. As to quaternary structure, homodimer; forms a homodimer in absence of cyclic nucleotide (c-di-GMP or cGAMP). Homotetramer; in presence of cyclic nucleotide (c-di-GMP or cGAMP), forms tetramers and higher-order oligomers through side-by-side packing. Interacts (when phosphorylated) with irf3; following activation and phosphorylation by tbk1, recruits irf3. Post-translationally, phosphorylation by TBK1 leads to activation and production of IFN-beta. Following cyclic nucleotide (c-di-GMP or cGAMP)-binding, activation and translocation from the endoplasmic reticulum, STING1 is phosphorylated by tbk1, leading to recruitment of the transcription factor irf3 to induce type-I interferons and other cytokines.

The protein localises to the endoplasmic reticulum membrane. It is found in the cytoplasm. Its subcellular location is the perinuclear region. It localises to the endoplasmic reticulum-Golgi intermediate compartment membrane. The protein resides in the golgi apparatus membrane. The protein localises to the cytoplasmic vesicle. It is found in the autophagosome membrane. The catalysed reaction is H(+)(in) = H(+)(out). Its function is as follows. Facilitator of innate immune signaling that acts as a sensor of cytosolic DNA from bacteria and viruses and promotes the production of type I interferon (IFN-alpha and IFN-beta). Innate immune response is triggered in response to non-CpG double-stranded DNA from viruses and bacteria delivered to the cytoplasm. Acts by binding cyclic dinucleotides: recognizes and binds cyclic di-GMP (c-di-GMP), a second messenger produced by bacteria, and cyclic GMP-AMP (cGAMP), a messenger produced by CGAS in response to DNA virus in the cytosol. Upon binding of c-di-GMP or cGAMP, STING1 oligomerizes and is able to activate both NF-kappa-B and irf3 transcription pathways to induce expression of type I interferon and exert a potent anti-viral state. Exhibits 2',3' phosphodiester linkage-specific ligand recognition: can bind both 2'-3' linked cGAMP and 3'-3' linked cGAMP but is preferentially activated by 2'-3' linked cGAMP. In addition to promote the production of type I interferons, plays a direct role in autophagy. Following cGAMP-binding, STING1 buds from the endoplasmic reticulum into COPII vesicles, which then form the endoplasmic reticulum-Golgi intermediate compartment (ERGIC). The ERGIC serves as the membrane source for LC3 lipidation, leading to formation of autophagosomes that target cytosolic DNA or DNA viruses for degradation by the lysosome. Promotes autophagy by acting as a proton channel that directs proton efflux from the Golgi to facilitate LC3 lipidation. The autophagy- and interferon-inducing activities can be uncoupled and autophagy induction is independent of TBK1 phosphorylation. The sequence is that of Stimulator of interferon genes protein from Danio rerio (Zebrafish).